The chain runs to 399 residues: Stomatin-like protein 1 (399 aa).

The short motif at G6–L10 is the Tyrosine-type lysosomal sorting signal element. S28 is modified (phosphoserine). Residues L58–A78 traverse the membrane as a helical; Signal-anchor for type III membrane protein segment. Residues L79–K399 lie on the Cytoplasmic side of the membrane. In terms of domain architecture, SCP2 spans K288–K399.

This sequence belongs to the band 7/mec-2 family. Interacts with STOM; may redistribute STOM from the plasma membrane to late endosomes. Expressed in dorsal root ganglion neurons.

Its subcellular location is the membrane. The protein localises to the cytoplasmic vesicle. It is found in the cell membrane. The protein resides in the late endosome membrane. It localises to the membrane raft. May play a role in cholesterol transfer to late endosomes. May play a role in modulating membrane acid-sensing ion channels. Can specifically inhibit proton-gated current of ASIC1 isoform 1. Can increase inactivation speed of ASIC3. May be involved in regulation of proton sensing in dorsal root ganglions. This Mus musculus (Mouse) protein is Stomatin-like protein 1 (Stoml1).